Reading from the N-terminus, the 260-residue chain is 3'-5' ssDNA/RNA exonuclease TatD (260 aa).

A divalent metal cation contacts are provided by Glu-91, His-127, and His-152.

Belongs to the metallo-dependent hydrolases superfamily. TatD-type hydrolase family. TatD subfamily. In terms of assembly, monomer. Mg(2+) serves as cofactor.

Its subcellular location is the cytoplasm. Its function is as follows. 3'-5' exonuclease that prefers single-stranded DNA and RNA. May play a role in the H(2)O(2)-induced DNA damage repair. The chain is 3'-5' ssDNA/RNA exonuclease TatD from Escherichia fergusonii (strain ATCC 35469 / DSM 13698 / CCUG 18766 / IAM 14443 / JCM 21226 / LMG 7866 / NBRC 102419 / NCTC 12128 / CDC 0568-73).